A 78-amino-acid polypeptide reads, in one-letter code: Bowman-Birk type proteinase inhibitors I-A, I-B, and I-A' (78 aa).

Disulfide bonds link cysteine 18–cysteine 72, cysteine 19–cysteine 34, cysteine 22–cysteine 68, cysteine 24–cysteine 32, cysteine 42–cysteine 49, cysteine 46–cysteine 61, and cysteine 51–cysteine 59.

It belongs to the Bowman-Birk serine protease inhibitor family.

In terms of biological role, these inhibitors strongly inhibit trypsin. This Phaseolus angularis (Azuki bean) protein is Bowman-Birk type proteinase inhibitors I-A, I-B, and I-A'.